Reading from the N-terminus, the 312-residue chain is Methionyl-tRNA formyltransferase (312 aa).

117-120 (SLLP) is a binding site for (6S)-5,6,7,8-tetrahydrofolate.

Belongs to the Fmt family.

It carries out the reaction L-methionyl-tRNA(fMet) + (6R)-10-formyltetrahydrofolate = N-formyl-L-methionyl-tRNA(fMet) + (6S)-5,6,7,8-tetrahydrofolate + H(+). Its function is as follows. Attaches a formyl group to the free amino group of methionyl-tRNA(fMet). The formyl group appears to play a dual role in the initiator identity of N-formylmethionyl-tRNA by promoting its recognition by IF2 and preventing the misappropriation of this tRNA by the elongation apparatus. This Bordetella bronchiseptica (strain ATCC BAA-588 / NCTC 13252 / RB50) (Alcaligenes bronchisepticus) protein is Methionyl-tRNA formyltransferase.